The following is a 221-amino-acid chain: MNNTVLILKKISKHYKQGNTIVKVLDDLNLTANEGELIAIIGSSGSGKSTLLHIAGLLDKPTNGQVIIPNSKYKKYHLIRLYYLGFIYQQHHLLKDFTALENVIIPRLIRGLDQKEAIRDATKILDDLGLEKKLYNMPGELSGGEQQRVAIARSLINKPRIILADEPTGNLDPKSTNEVFNLFLKVAQKQNTTVIMVTHNHELAHKMDKLYNLKNGLLNIA.

One can recognise an ABC transporter domain in the interval 6 to 220 (LILKKISKHY…YNLKNGLLNI (215 aa)). 42–49 (GSSGSGKS) is a binding site for ATP.

The protein belongs to the ABC transporter superfamily. Lipoprotein translocase (TC 3.A.1.125) family. In terms of assembly, the complex is composed of two ATP-binding proteins (LolD) and two transmembrane proteins (LolC and LolE).

It is found in the cell inner membrane. Its function is as follows. Part of the ABC transporter complex LolCDE involved in the translocation of mature outer membrane-directed lipoproteins, from the inner membrane to the periplasmic chaperone, LolA. Responsible for the formation of the LolA-lipoprotein complex in an ATP-dependent manner. The sequence is that of Lipoprotein-releasing system ATP-binding protein LolD from Rickettsia typhi (strain ATCC VR-144 / Wilmington).